A 688-amino-acid polypeptide reads, in one-letter code: Lipase (688 aa).

Positions methionine 1–alanine 35 are cleaved as a signal peptide. The segment at glycine 31–asparagine 309 is disordered. Residues alanine 36–alanine 302 constitute a propeptide, removed in mature form. The segment covering valine 45 to glycine 54 has biased composition (polar residues). Basic and acidic residues-rich tracts occupy residues glutamate 84 to aspartate 95 and serine 103 to serine 143. Polar residues-rich tracts occupy residues glutamate 144 to glutamate 175 and lysine 184 to glutamate 211. Residues lysine 227 to histidine 268 show a composition bias toward basic and acidic residues. Polar residues predominate over residues leucine 274–glutamine 289. Serine 418 serves as the catalytic Nucleophile. Aspartate 609 serves as the catalytic Charge relay system. Aspartate 647 contributes to the Ca(2+) binding site. Residue histidine 648 is the Charge relay system of the active site. Residues aspartate 650, aspartate 655, and aspartate 658 each contribute to the Ca(2+) site.

Belongs to the AB hydrolase superfamily. Lipase family.

The protein resides in the secreted. The catalysed reaction is a triacylglycerol + H2O = a diacylglycerol + a fatty acid + H(+). This Staphylococcus epidermidis (strain ATCC 35984 / DSM 28319 / BCRC 17069 / CCUG 31568 / BM 3577 / RP62A) protein is Lipase (lip).